We begin with the raw amino-acid sequence, 253 residues long: Ribonuclease PH (253 aa).

Phosphate contacts are provided by residues arginine 86 and 124-126; that span reads GTR.

It belongs to the RNase PH family. As to quaternary structure, homohexameric ring arranged as a trimer of dimers.

The catalysed reaction is tRNA(n+1) + phosphate = tRNA(n) + a ribonucleoside 5'-diphosphate. Phosphorolytic 3'-5' exoribonuclease that plays an important role in tRNA 3'-end maturation. Removes nucleotide residues following the 3'-CCA terminus of tRNAs; can also add nucleotides to the ends of RNA molecules by using nucleoside diphosphates as substrates, but this may not be physiologically important. Probably plays a role in initiation of 16S rRNA degradation (leading to ribosome degradation) during starvation. The sequence is that of Ribonuclease PH from Brevibacillus brevis (strain 47 / JCM 6285 / NBRC 100599).